The following is an 81-amino-acid chain: Translational regulator CsrA (81 aa).

The protein belongs to the CsrA/RsmA family. As to quaternary structure, homodimer; the beta-strands of each monomer intercalate to form a hydrophobic core, while the alpha-helices form wings that extend away from the core.

Its subcellular location is the cytoplasm. In terms of biological role, a translational regulator that binds mRNA to regulate translation initiation and/or mRNA stability. Usually binds in the 5'-UTR at or near the Shine-Dalgarno sequence preventing ribosome-binding, thus repressing translation. Its main target seems to be the major flagellin gene, while its function is anatagonized by FliW. The polypeptide is Translational regulator CsrA (Halothermothrix orenii (strain H 168 / OCM 544 / DSM 9562)).